The primary structure comprises 252 residues: MLAKRIIPCLDVKAGRVVKGVNFIGLQDIGDPVEIAALYNQAGADEIVFLDITATYEERKTIVDVVEKTASKVFIPLTVGGGISTVKDIYTLLRAGADKVSLNSAAVKNPLFIQEGAEHFGSQCIVVAIDARKVEEDKWHVYVNGGRTDTGIDAVHWAKQVAELGAGEILLTSMDADGTKDGYNLRLTDIISANVSIPVIASGGCGSANHIVEVFAHTSVNAALAASIFHYGECTVQEVKQKLQYAGIEVRI.

Residues aspartate 11 and aspartate 130 contribute to the active site.

This sequence belongs to the HisA/HisF family. As to quaternary structure, heterodimer of HisH and HisF.

Its subcellular location is the cytoplasm. The enzyme catalyses 5-[(5-phospho-1-deoxy-D-ribulos-1-ylimino)methylamino]-1-(5-phospho-beta-D-ribosyl)imidazole-4-carboxamide + L-glutamine = D-erythro-1-(imidazol-4-yl)glycerol 3-phosphate + 5-amino-1-(5-phospho-beta-D-ribosyl)imidazole-4-carboxamide + L-glutamate + H(+). The protein operates within amino-acid biosynthesis; L-histidine biosynthesis; L-histidine from 5-phospho-alpha-D-ribose 1-diphosphate: step 5/9. Its function is as follows. IGPS catalyzes the conversion of PRFAR and glutamine to IGP, AICAR and glutamate. The HisF subunit catalyzes the cyclization activity that produces IGP and AICAR from PRFAR using the ammonia provided by the HisH subunit. This Bacillus cytotoxicus (strain DSM 22905 / CIP 110041 / 391-98 / NVH 391-98) protein is Imidazole glycerol phosphate synthase subunit HisF.